The following is a 354-amino-acid chain: Erythroferrone (354 aa).

The first 28 residues, Met-1–Gly-28, serve as a signal peptide directing secretion. Composition is skewed to low complexity over residues Gly-26 to Arg-37 and Pro-51 to Ala-62. A disordered region spans residues Gly-26–Pro-123. Over residues Thr-69–Asp-80 the composition is skewed to basic and acidic residues. A compositionally biased stretch (basic residues) spans Asn-94–Lys-107. Residues Pro-111, Pro-113, Pro-114, Pro-116, Pro-117, and Pro-119 each carry the hydroxyproline modification. Positions Pro-111 to Pro-123 are enriched in pro residues. Residues Ala-199–Val-354 enclose the C1q domain. N-linked (GlcNAc...) asparagine glycans are attached at residues Asn-243, Asn-295, and Asn-333.

This sequence belongs to the adipolin/erythroferrone family. Homodimer; disulfide-linked. Forms trimer, hexamers and higher molecular weight oligomers. May form heteromeric complexes with C1QTNF2 and C1QTNF12 and, to a lesser extent, with C1QTNF5 and C1QTNF10. Interacts with BMP5 and BMP7; the interaction inhibits BMP-induced transcription of HAMP. Interacts with BMP6; the interaction inhibits BMP-induced transcription of HAMP. Interacts with BMP2. Interacts with heterodimers composed of BMP2 and BMP6 in vitro, the interaction inhibits the heterodimer binding to its receptor BMPR1A /ALK3 and thereby suppresses expression of HAMP. Post-translationally, N-glycosylated; required for secretion of the mature protein.

The protein resides in the secreted. Its function is as follows. Iron-regulatory hormone that acts as an erythroid regulator after hemorrhage: produced by erythroblasts following blood loss and mediates suppression of hepcidin (HAMP) expression in the liver, thereby promoting increased iron absorption and mobilization from stores. Promotes lipid uptake into adipocytes and hepatocytes via transcriptional up-regulation of genes involved in fatty acid uptake. Inhibits apoptosis and inflammatory response in cardiomyocytes via promotion of sphingosine-1-phosphate (S1P) and cAMP-dependent activation of AKT signaling. Inhibits autophagy induced by nutrient deficiency in hepatocytes via promoting the phosphorylation of IRS1, AKT, and MTOR, and thereby subsequent activation of the AKT-MTOR signaling pathway. Negatively regulates the differentiation of osteoblasts, potentially via sequestering BMP2, and thereby inhibits the activation of SMAD signaling. The reduction in BMP2 signaling in osteoblasts also results in an increase in expression of the osteoclastogenesis-promoting factors TNFSF11/RANKL and SOST, thereby indirectly promotes bone resorption. In Homo sapiens (Human), this protein is Erythroferrone.